Reading from the N-terminus, the 467-residue chain is Fumarate hydratase class II (467 aa).

Residues Ser-98–Thr-100, Arg-126, His-129–Asp-132, Ser-139–Asn-141, and Thr-187 contribute to the substrate site. His-188 (proton donor/acceptor) is an active-site residue. Ser-318 is a catalytic residue. Residues Ser-319 and Lys-324–Asn-326 contribute to the substrate site.

The protein belongs to the class-II fumarase/aspartase family. Fumarase subfamily. In terms of assembly, homotetramer.

It is found in the cytoplasm. It catalyses the reaction (S)-malate = fumarate + H2O. It participates in carbohydrate metabolism; tricarboxylic acid cycle; (S)-malate from fumarate: step 1/1. Functionally, involved in the TCA cycle. Catalyzes the stereospecific interconversion of fumarate to L-malate. In Shigella flexneri, this protein is Fumarate hydratase class II.